Reading from the N-terminus, the 259-residue chain is MFHEFHACQHADAPTLVLSSGLGGSGRYWADDLTLLTRDYHVLVYDHAGTGRSPAVLPADYSIRHMAIELLALLDSLDIQRCHFMGHALGGLVGLELALLRPELLHSQVLINAWSSPNPHSARCFSVRKKLLLNSGPEAYVQAQALFLYPADWIAANGPRLADDEAHALAHFPDTDNLLRRIHALETFDVSAELSRIHTPTLLIANRDDMLVPWQQSRHLANALPNATLVLLEYGGHASNITDPLPFQRALRAFLSTQP.

It belongs to the AB hydrolase superfamily. Hydrolase RutD family.

It catalyses the reaction carbamate + 2 H(+) = NH4(+) + CO2. Its function is as follows. Involved in pyrimidine catabolism. May facilitate the hydrolysis of carbamate, a reaction that can also occur spontaneously. The sequence is that of Putative carbamate hydrolase RutD from Pseudomonas syringae pv. syringae (strain B728a).